The sequence spans 183 residues: ARS-binding factor 2, mitochondrial (183 aa).

Residues 1–26 constitute a mitochondrion transit peptide; sequence MNSYSLLTRSFHESSKPLFNLASTLL. DNA-binding regions (HMG box) lie at residues 43–111 and 116–183; these read PKRP…KEFD and PKKP…YPLN.

It is found in the mitochondrion. The protein localises to the nucleus. Its function is as follows. Specific binding to the autonomously replicating sequence 1 (ARS1). Interaction with regulatory regions: probably involved in compacting the mitochondrial genome. It might play a positive role in gene expression and replication. This chain is ARS-binding factor 2, mitochondrial (ABF2), found in Saccharomyces cerevisiae (strain ATCC 204508 / S288c) (Baker's yeast).